The chain runs to 529 residues: Bifunctional purine biosynthesis protein PurH (529 aa).

Residues 1-148 (MQPPRPVRRA…KNHKDVAIVV (148 aa)) form the MGS-like domain.

This sequence belongs to the PurH family.

The enzyme catalyses (6R)-10-formyltetrahydrofolate + 5-amino-1-(5-phospho-beta-D-ribosyl)imidazole-4-carboxamide = 5-formamido-1-(5-phospho-D-ribosyl)imidazole-4-carboxamide + (6S)-5,6,7,8-tetrahydrofolate. The catalysed reaction is IMP + H2O = 5-formamido-1-(5-phospho-D-ribosyl)imidazole-4-carboxamide. It functions in the pathway purine metabolism; IMP biosynthesis via de novo pathway; 5-formamido-1-(5-phospho-D-ribosyl)imidazole-4-carboxamide from 5-amino-1-(5-phospho-D-ribosyl)imidazole-4-carboxamide (10-formyl THF route): step 1/1. Its pathway is purine metabolism; IMP biosynthesis via de novo pathway; IMP from 5-formamido-1-(5-phospho-D-ribosyl)imidazole-4-carboxamide: step 1/1. The polypeptide is Bifunctional purine biosynthesis protein PurH (Sodalis glossinidius (strain morsitans)).